A 328-amino-acid polypeptide reads, in one-letter code: Ribosomal protein L11 methyltransferase (328 aa).

S-adenosyl-L-methionine is bound by residues T158, G180, D202, and N246.

It belongs to the methyltransferase superfamily. PrmA family.

Its subcellular location is the cytoplasm. The catalysed reaction is L-lysyl-[protein] + 3 S-adenosyl-L-methionine = N(6),N(6),N(6)-trimethyl-L-lysyl-[protein] + 3 S-adenosyl-L-homocysteine + 3 H(+). Functionally, methylates ribosomal protein L11. The protein is Ribosomal protein L11 methyltransferase of Polynucleobacter necessarius subsp. necessarius (strain STIR1).